The primary structure comprises 428 residues: MFDEPIISSFVFTNEETTQTFHHQWFSQGQLHECATCYSSIDADEPPSQHWLRGGEASQGLHLTKQQQAVMDIIEARQIETFFFCDESSKDKLEHFMGETCARGIPELLRWMFQNNTVAVEFNLACYVNAMDQVLIFQSGSLRADHHYDVDESVGVVYEMLMQRIENYLNCSSEYGMAECSITRLKVQVKRIRVEADGQSADSSVFALPLQLQEEEGLTATTGCSTSEAELASLRSAYLKHFRECNGYFPPNMRVNLYGLQQCKTTKELYVVPYHISETLQQLPNKNFLILNNIMGQFQRLHELSTPVNSIERDQTSSPLKDLHCRRCRTQFSRRSKLHIHQKLRCGQDFSVDSMHADIVEIYEQCLPISRSVFQHACYGITKPKTMMRKGQFVPIECDWRSESSVKVQHGPCVVISNAQHNSPCKFY.

The segment at 325–346 (CRRCRTQFSRRSKLHIHQKLRC) adopts a C3H1-type zinc-finger fold.

This is Protein terminus (term) from Drosophila melanogaster (Fruit fly).